Consider the following 174-residue polypeptide: Regulator of G-protein signaling 8 (174 aa).

Residues serine 46 to leucine 162 form the RGS domain.

The protein localises to the cell membrane. Its subcellular location is the membrane. It is found in the perikaryon. The protein resides in the cell projection. It localises to the dendrite. The protein localises to the nucleus. Functionally, regulates G protein-coupled receptor signaling cascades, including signaling via muscarinic acetylcholine receptors and dopamine receptors. Inhibits signal transduction by increasing the GTPase activity of G protein alpha subunits, thereby driving them into their inactive GDP-bound form. Modulates the activity of potassium channels that are activated in response to G protein-coupled receptor signaling. This chain is Regulator of G-protein signaling 8 (rgs8), found in Danio rerio (Zebrafish).